We begin with the raw amino-acid sequence, 63 residues long: Large ribosomal subunit protein uL29 (63 aa).

It belongs to the universal ribosomal protein uL29 family.

The chain is Large ribosomal subunit protein uL29 from Baumannia cicadellinicola subsp. Homalodisca coagulata.